The following is a 52-amino-acid chain: Large ribosomal subunit protein eL39 (52 aa).

The protein belongs to the eukaryotic ribosomal protein eL39 family.

The chain is Large ribosomal subunit protein eL39 (RPL39) from Tetrahymena thermophila (strain SB210).